The chain runs to 356 residues: S-adenosylmethionine:tRNA ribosyltransferase-isomerase (356 aa).

It belongs to the QueA family. As to quaternary structure, monomer.

It is found in the cytoplasm. It carries out the reaction 7-aminomethyl-7-carbaguanosine(34) in tRNA + S-adenosyl-L-methionine = epoxyqueuosine(34) in tRNA + adenine + L-methionine + 2 H(+). Its pathway is tRNA modification; tRNA-queuosine biosynthesis. In terms of biological role, transfers and isomerizes the ribose moiety from AdoMet to the 7-aminomethyl group of 7-deazaguanine (preQ1-tRNA) to give epoxyqueuosine (oQ-tRNA). In Shigella dysenteriae serotype 1 (strain Sd197), this protein is S-adenosylmethionine:tRNA ribosyltransferase-isomerase.